The sequence spans 278 residues: MLVGAHESIAGGVANAVDRQLENGGNCGQIFTHSPQVWQDPSIDDTDAEAFRDRSQMHDIGPWVIHSSYLVNLCTPKDDLRAKSIDSMQQEVDAAAQLSIPYVNVHLGAHTGAGKQQGLDNAISALDELTIPDSVTVLLESDAGSGTKLGNKFDHLAYVLEESTHELEVCLDTAHVFAAGYDLSTPAAVNTTIKEFDTTVGVDNLACVHLNDSKHACGTNKDEHAHIGEGKIGESGMEAFINHSAIDPIPLVLETPNENGKGFAWNIDRVQNLAENPA.

Zn(2+) contacts are provided by histidine 66, histidine 106, glutamate 140, aspartate 172, histidine 175, histidine 209, aspartate 222, histidine 224, and glutamate 254.

The protein belongs to the AP endonuclease 2 family. Requires Zn(2+) as cofactor.

The enzyme catalyses Endonucleolytic cleavage to 5'-phosphooligonucleotide end-products.. In terms of biological role, endonuclease IV plays a role in DNA repair. It cleaves phosphodiester bonds at apurinic or apyrimidinic (AP) sites, generating a 3'-hydroxyl group and a 5'-terminal sugar phosphate. The sequence is that of Probable endonuclease 4 from Haloquadratum walsbyi (strain DSM 16790 / HBSQ001).